The chain runs to 221 residues: Uracil-DNA glycosylase (221 aa).

Catalysis depends on D65, which acts as the Proton acceptor.

The protein belongs to the uracil-DNA glycosylase (UDG) superfamily. UNG family.

It localises to the cytoplasm. It catalyses the reaction Hydrolyzes single-stranded DNA or mismatched double-stranded DNA and polynucleotides, releasing free uracil.. Functionally, excises uracil residues from the DNA which can arise as a result of misincorporation of dUMP residues by DNA polymerase or due to deamination of cytosine. This Christiangramia forsetii (strain DSM 17595 / CGMCC 1.15422 / KT0803) (Gramella forsetii) protein is Uracil-DNA glycosylase.